The following is a 345-amino-acid chain: Transcription initiation factor IIB (345 aa).

The TFIIB-type zinc finger occupies 20–53; that stretch reads IVLTCPECKVYPPKIVERFSEGDVVCALCGLVLS. The Zn(2+) site is built by C24, C27, C45, and C48. The span at 65–78 shows a compositional bias: basic and acidic residues; it reads TFSNDDHNGDDPSR. The tract at residues 65–93 is disordered; sequence TFSNDDHNGDDPSRVGEASNPLLDGNNLS. 2 tandem repeats follow at residues 136–212 and 242–318.

Belongs to the TFIIB family. As to quaternary structure, associates with TFIID-IIA (DA complex) to form TFIID-IIA-IIB (DAB-complex) which is then recognized by polymerase II.

Its subcellular location is the nucleus. Its function is as follows. General factor that plays a major role in the activation of eukaryotic genes transcribed by RNA polymerase II. This chain is Transcription initiation factor IIB (SUA7), found in Saccharomyces cerevisiae (strain ATCC 204508 / S288c) (Baker's yeast).